Here is a 449-residue protein sequence, read N- to C-terminus: UDP-glycosyltransferase 76E7 (449 aa).

Residues Ser275, 333–335 (APQ), 350–358 (HCGWNSTLE), and 372–375 (TTDQ) each bind UDP-alpha-D-glucose.

Belongs to the UDP-glycosyltransferase family.

This chain is UDP-glycosyltransferase 76E7 (UGT76E7), found in Arabidopsis thaliana (Mouse-ear cress).